The chain runs to 362 residues: Peptide chain release factor 1 (362 aa).

Residue Q237 is modified to N5-methylglutamine.

The protein belongs to the prokaryotic/mitochondrial release factor family. Post-translationally, methylated by PrmC. Methylation increases the termination efficiency of RF1.

The protein localises to the cytoplasm. Functionally, peptide chain release factor 1 directs the termination of translation in response to the peptide chain termination codons UAG and UAA. The protein is Peptide chain release factor 1 of Legionella pneumophila (strain Corby).